The sequence spans 41 residues: Photosystem I reaction center subunit IX (41 aa).

The chain crosses the membrane as a helical span at residues 7-27; sequence YLSTAPVLTLVSLTAVAGLLI.

It belongs to the PsaJ family.

It localises to the plastid. Its subcellular location is the chloroplast thylakoid membrane. Functionally, may help in the organization of the PsaE and PsaF subunits. The sequence is that of Photosystem I reaction center subunit IX from Chlorella vulgaris (Green alga).